The sequence spans 122 residues: MFKRSEKVAEAVHELISELLVKGLKDPRIGFVTITGVKVTDDMHLATVYFTVIGSDAEKKATEQGLNSARGFIRKEMGKSLRMRYVPDIVFKYDVSVDYGYRIESILKEISSSEQSDDKQDS.

It belongs to the RbfA family. Monomer. Binds 30S ribosomal subunits, but not 50S ribosomal subunits or 70S ribosomes.

It is found in the cytoplasm. One of several proteins that assist in the late maturation steps of the functional core of the 30S ribosomal subunit. Associates with free 30S ribosomal subunits (but not with 30S subunits that are part of 70S ribosomes or polysomes). Required for efficient processing of 16S rRNA. May interact with the 5'-terminal helix region of 16S rRNA. The chain is Ribosome-binding factor A from Geotalea uraniireducens (strain Rf4) (Geobacter uraniireducens).